Consider the following 994-residue polypeptide: NACHT, LRR and PYD domains-containing protein 4 (994 aa).

Residues 1–94 (MAASFFSDFG…CMKVMRERTG (94 aa)) enclose the Pyrin domain. One can recognise an NACHT domain in the interval 149 to 472 (RTVIIQGPQG…FYLLKSHLDH (324 aa)). Residue 155 to 162 (GPQGIGKT) coordinates ATP. LRR repeat units follow at residues 637–660 (SGHL…TWCN), 698–721 (YLSF…LNYP), 722–745 (AGNV…VLAG), 750–777 (NKKL…LCSP), 806–833 (NKSV…ALKH), 863–886 (NQNL…LLCR), 920–943 (SKTL…VLCE), and 949–972 (ECAL…LLTA).

Belongs to the NLRP family. In terms of assembly, interacts with CHUK/IKKA, inhibiting its kinase activity.

Functionally, may be involved in inflammation and recognition of cytosolic pathogen-associated molecular patterns (PAMPs) not intercepted by membrane-bound receptors. Acts as a negative regulator of the type I interferon signaling pathway by serving as an adapter to promote DTX4-mediated ubiquitination of activated TBK1, and its subsequent degradation. Suppresses NF-kappaB induction by the cytokines TNFA and IL1B, suggesting that it operates at a point of convergence in these two cytokine signaling pathways. The sequence is that of NACHT, LRR and PYD domains-containing protein 4 from Homo sapiens (Human).